A 188-amino-acid polypeptide reads, in one-letter code: Elongation factor P (188 aa).

It belongs to the elongation factor P family.

Its subcellular location is the cytoplasm. Its pathway is protein biosynthesis; polypeptide chain elongation. In terms of biological role, involved in peptide bond synthesis. Stimulates efficient translation and peptide-bond synthesis on native or reconstituted 70S ribosomes in vitro. Probably functions indirectly by altering the affinity of the ribosome for aminoacyl-tRNA, thus increasing their reactivity as acceptors for peptidyl transferase. The sequence is that of Elongation factor P from Rhodopseudomonas palustris (strain HaA2).